Consider the following 238-residue polypeptide: Ribonuclease PH (238 aa).

Residues R86 and 124 to 126 (GTR) each bind phosphate.

This sequence belongs to the RNase PH family. As to quaternary structure, homohexameric ring arranged as a trimer of dimers.

The catalysed reaction is tRNA(n+1) + phosphate = tRNA(n) + a ribonucleoside 5'-diphosphate. Its function is as follows. Phosphorolytic 3'-5' exoribonuclease that plays an important role in tRNA 3'-end maturation. Removes nucleotide residues following the 3'-CCA terminus of tRNAs; can also add nucleotides to the ends of RNA molecules by using nucleoside diphosphates as substrates, but this may not be physiologically important. Probably plays a role in initiation of 16S rRNA degradation (leading to ribosome degradation) during starvation. The polypeptide is Ribonuclease PH (Anaeromyxobacter sp. (strain Fw109-5)).